The chain runs to 39 residues: Natriuretic peptide HsNP-a (39 aa).

The propeptide occupies 1–8 (SGSKTAKI). Cysteines 12 and 28 form a disulfide.

This sequence belongs to the natriuretic peptide family. As to expression, expressed by the venom gland.

It localises to the secreted. In terms of biological role, snake venom natriuretic peptide that targets both NPR1 and NPR2. Exhibits hypotensive and vasodepressor activities. The chain is Natriuretic peptide HsNP-a from Hoplocephalus stephensii (Stephens's banded snake).